Reading from the N-terminus, the 196-residue chain is Potassium-transporting ATPase KdpC subunit (196 aa).

A helical transmembrane segment spans residues 7–27 (PALVLFFVLTLLTGVAYPLAV).

The protein belongs to the KdpC family. As to quaternary structure, the system is composed of three essential subunits: KdpA, KdpB and KdpC.

The protein resides in the cell inner membrane. Functionally, part of the high-affinity ATP-driven potassium transport (or Kdp) system, which catalyzes the hydrolysis of ATP coupled with the electrogenic transport of potassium into the cytoplasm. This subunit acts as a catalytic chaperone that increases the ATP-binding affinity of the ATP-hydrolyzing subunit KdpB by the formation of a transient KdpB/KdpC/ATP ternary complex. The chain is Potassium-transporting ATPase KdpC subunit from Polaromonas naphthalenivorans (strain CJ2).